The sequence spans 124 residues: uncharacterized protein (124 aa).

Positions 62–72 (KKNKKQTFLKH) are enriched in basic residues. Positions 62–86 (KKNKKQTFLKHHQSDDHSENKVYKS) are disordered. Basic and acidic residues predominate over residues 73-83 (HQSDDHSENKV). The stretch at 80–112 (ENKVYKSKKLEKKIQQLNKKKQLIDTKINFLKE) forms a coiled coil.

This is an uncharacterized protein from Dictyostelium discoideum (Social amoeba).